The primary structure comprises 501 residues: ATP synthase subunit alpha (501 aa).

170-177 (GDRQTGKS) contacts ATP.

The protein belongs to the ATPase alpha/beta chains family. As to quaternary structure, F-type ATPases have 2 components, CF(1) - the catalytic core - and CF(0) - the membrane proton channel. CF(1) has five subunits: alpha(3), beta(3), gamma(1), delta(1), epsilon(1). CF(0) has three main subunits: a(1), b(2) and c(9-12). The alpha and beta chains form an alternating ring which encloses part of the gamma chain. CF(1) is attached to CF(0) by a central stalk formed by the gamma and epsilon chains, while a peripheral stalk is formed by the delta and b chains.

It is found in the cell membrane. It carries out the reaction ATP + H2O + 4 H(+)(in) = ADP + phosphate + 5 H(+)(out). Functionally, produces ATP from ADP in the presence of a proton gradient across the membrane. The alpha chain is a regulatory subunit. This chain is ATP synthase subunit alpha, found in Acholeplasma laidlawii (strain PG-8A).